We begin with the raw amino-acid sequence, 318 residues long: Magnetosome protein MamM (318 aa).

The interval 1–210 is transmembrane domain (TMD); the sequence is MRKSGCAVCS…FMDAYRGLMD (210 aa). The next 4 membrane-spanning stretches (helical) occupy residues 13–33, 39–59, 81–101, and 117–137; these read IGWV…FVGL, AMLA…MVII, FILS…LLVH, and LIVL…YFYS. A C-terminal domain (CTD) region spans residues 211–318; sequence HTAGEAVQNR…DEVMLSKVDN (108 aa). Residues D249, H264, H285, and E289 each contribute to the Fe cation site.

This sequence belongs to the cation diffusion facilitator (CDF) transporter (TC 2.A.4) family. As to quaternary structure, forms homodimers via its C-terminal domain (CTD) in the presence of metal cations. Interacts with MamB via their CTD. Isolated CTD forms homodimers.

It is found in the magnetosome membrane. Its subcellular location is the cell inner membrane. Essential for magnetosome formation; required for stable accumulation of MamB. May nucleate iron crystal formation. Probably binds and transports iron. Binds divalent cations, possibly up to 3 Zn(2+) per dimer in vitro, probably iron in vivo. One of 7 genes (mamLQBIEMO) able to induce magnetosome membrane biogenesis; coexpression of mamLQRBIEMO in a deletion of the 17 gene mamAB operon restores magnetosome vesicle formation but not magnetite biosynthesis. This is Magnetosome protein MamM from Magnetospirillum gryphiswaldense (strain DSM 6361 / JCM 21280 / NBRC 15271 / MSR-1).